Reading from the N-terminus, the 489-residue chain is Virion host shutoff protein (489 aa).

Disordered stretches follow at residues 110 to 135 (EEAS…AFSN), 142 to 161 (SLAS…PSAA), 285 to 316 (RSQT…GGTE), and 333 to 363 (YEDD…ILTP). Polar residues predominate over residues 124-134 (ITDSRPSSAFS).

The protein belongs to the herpesviridae VHS protein family. As to quaternary structure, interacts with human EIF4H, EIF4A1 and EIF4A2; interaction with eIF4AI and EIF4A2 presumably allows Vhs protein to associate with the eIF4F cap-binding complex.

It is found in the virion. Minor structural protein that acts as an endoribonuclease during lytic infection. Degrades host mRNAs in the cytoplasm by cutting them at preferred sites, including some in regions of translation initiation. Together with inhibition of host splicing by ICP27, contributes to an overall decrease in host protein synthesis. Also, after the onset of viral transcription, accelerates the turnover of viral mRNA, thereby facilitating the sequential expression of different classes of viral genes. Binds translation initiation factors eIF4H, eIF4AI, and eIF4AII, thereby may interact directly with the translation initiation complex and thus digest specifically mRNAs. Also impedes antigen presentation by major histocompatibility complex class I and class II molecules, inhibits secretion of cytokines that would otherwise recruit lymphocytes and neutrophils cells to the site of infection and blocks the activation of dendritic cells. Impedes the alpha/beta interferon-mediated response to infection by evading the cGAS/ STING-mediated DNA-sensing pathway and degrading CGAS via its RNase activity. The protein is Virion host shutoff protein (UL41) of Human herpesvirus 1 (strain KOS) (HHV-1).